Consider the following 360-residue polypeptide: Phospho-N-acetylmuramoyl-pentapeptide-transferase (360 aa).

10 helical membrane passes run 26–46 (AILG…KLIE), 74–94 (MGGL…GDLG), 97–117 (YVWV…IDDY), 134–154 (YILQ…TAAN), 168–188 (VMPQ…VGSS), 199–219 (GLAI…AYLS), 236–256 (SGEL…FLWF), 263–283 (VFMG…IAVL), 288–308 (ILLV…ILQV), and 338–358 (VIVR…ATLK).

The protein belongs to the glycosyltransferase 4 family. MraY subfamily. It depends on Mg(2+) as a cofactor.

The protein localises to the cell inner membrane. The catalysed reaction is UDP-N-acetyl-alpha-D-muramoyl-L-alanyl-gamma-D-glutamyl-meso-2,6-diaminopimeloyl-D-alanyl-D-alanine + di-trans,octa-cis-undecaprenyl phosphate = di-trans,octa-cis-undecaprenyl diphospho-N-acetyl-alpha-D-muramoyl-L-alanyl-D-glutamyl-meso-2,6-diaminopimeloyl-D-alanyl-D-alanine + UMP. Its pathway is cell wall biogenesis; peptidoglycan biosynthesis. Its function is as follows. Catalyzes the initial step of the lipid cycle reactions in the biosynthesis of the cell wall peptidoglycan: transfers peptidoglycan precursor phospho-MurNAc-pentapeptide from UDP-MurNAc-pentapeptide onto the lipid carrier undecaprenyl phosphate, yielding undecaprenyl-pyrophosphoryl-MurNAc-pentapeptide, known as lipid I. This chain is Phospho-N-acetylmuramoyl-pentapeptide-transferase, found in Shewanella baltica (strain OS195).